The chain runs to 95 residues: TBK1 inhibitor DP96R (95 aa).

It belongs to the asfivirus DP96R family.

In terms of biological role, inhibits cGAS-STING-mediated type I IFN expression and NF-kB activation by inhibiting TBK1 and IKBKB/IKKB. Inhibits host TBK1 phosphorylation. The protein is TBK1 inhibitor DP96R of Ornithodoros (relapsing fever ticks).